The chain runs to 64 residues: Large ribosomal subunit protein bL35 (64 aa).

Over residues 1-17 the composition is skewed to basic residues; that stretch reads MKQKTHSGIKKRIKKTG. The tract at residues 1–64 is disordered; that stretch reads MKQKTHSGIK…KRVNRLLGEG (64 aa). Residues 21-33 are compositionally biased toward basic and acidic residues; the sequence is LRREQANRRHLLE.

This sequence belongs to the bacterial ribosomal protein bL35 family.

In Corynebacterium kroppenstedtii (strain DSM 44385 / JCM 11950 / CIP 105744 / CCUG 35717), this protein is Large ribosomal subunit protein bL35.